Consider the following 103-residue polypeptide: Cell division protein FtsB (103 aa).

The Cytoplasmic segment spans residues 1–3 (MGK). Residues 4–21 (LTLLLLAILVWLQYSLWF) form a helical membrane-spanning segment. The Periplasmic portion of the chain corresponds to 22-103 (GKNGIHDYTR…RAQSAGQNNR (82 aa)). Residues 31–71 (RVNNDVAAQQATNAKLKARNDQLFAEIDDLNGGQEALEERA) are a coiled coil.

This sequence belongs to the FtsB family. As to quaternary structure, part of a complex composed of FtsB, FtsL and FtsQ.

Its subcellular location is the cell inner membrane. Essential cell division protein. May link together the upstream cell division proteins, which are predominantly cytoplasmic, with the downstream cell division proteins, which are predominantly periplasmic. The chain is Cell division protein FtsB from Escherichia coli O81 (strain ED1a).